Reading from the N-terminus, the 355-residue chain is Peptide chain release factor 1 (355 aa).

Position 231 is an N5-methylglutamine (glutamine 231). A compositionally biased stretch (basic and acidic residues) spans 283 to 292 (IAKETSERKS). Positions 283–303 (IAKETSERKSQVGTGDRSGRI) are disordered.

It belongs to the prokaryotic/mitochondrial release factor family. Post-translationally, methylated by PrmC. Methylation increases the termination efficiency of RF1.

It localises to the cytoplasm. Its function is as follows. Peptide chain release factor 1 directs the termination of translation in response to the peptide chain termination codons UAG and UAA. The sequence is that of Peptide chain release factor 1 from Campylobacter curvus (strain 525.92).